Reading from the N-terminus, the 485-residue chain is Dipeptide and tripeptide permease C (485 aa).

Residues 1-12 (MKTPSQPRAIYY) are Cytoplasmic-facing. Residues 13-33 (IVAIQIWEYFSFYGMRALLIL) form a helical membrane-spanning segment. At 34–46 (YLTHQLGFDDNHA) the chain is on the periplasmic side. A helical membrane pass occupies residues 47–67 (ISLFSAYASLVYVTPILGGWL). Residues 68 to 70 (ADR) are Cytoplasmic-facing. Residues 71–93 (LLGNRTAVIAGALLMTLGHVVLG) form a helical membrane-spanning segment. Over 94–102 (IDTNSTFSL) the chain is Periplasmic. A helical transmembrane segment spans residues 103–125 (YLALAIIICGYGLFKSNISCLLG). Residues 126–140 (ELYDENDHRRDGGFS) are Cytoplasmic-facing. Residues 141–161 (LLYAAGNIGSIAAPIACGLAA) form a helical membrane-spanning segment. Over 162–164 (QWY) the chain is Periplasmic. Residues 165–185 (GWHVGFALAGGGMFIGLLIFL) traverse the membrane as a helical segment. Over 186–208 (SGHRHFQSTRSMDKKALTSVKFA) the chain is Cytoplasmic. The helical transmembrane segment at 209–229 (LPVWSWLVVMLCLAPVFFTLL) threads the bilayer. Topologically, residues 230 to 234 (LENDW) are periplasmic. A helical membrane pass occupies residues 235–255 (SGYLLAIVCLIAAQIIARMMI). Over 256-262 (KFPEHRR) the chain is Cytoplasmic. A helical membrane pass occupies residues 263–283 (ALWQIVLLMFVGTLFWVLAQQ). The Periplasmic portion of the chain corresponds to 284–307 (GGSTISLFIDRFVNRQAFNIEVPT). A helical membrane pass occupies residues 308–328 (ALFQSVNAIAVMLAGVVLAWL). Topologically, residues 329-340 (ASPESRGNSTLR) are cytoplasmic. Residues 341–361 (VWLKFAFGLLLMACGFMLLAF) traverse the membrane as a helical segment. At 362 to 375 (DARHAAADGQASMG) the chain is on the periplasmic side. A helical membrane pass occupies residues 376-396 (VMISGLALMGFAELFIDPVAI). Residues 397–406 (AQITRLKMSG) lie on the Cytoplasmic side of the membrane. Residues 407-427 (VLTGIYMLATGAVANWLAGVV) form a helical membrane-spanning segment. The Periplasmic segment spans residues 428 to 446 (AQQTTESQISGMAIAAYQR). The helical transmembrane segment at 447–467 (FFSQMGEWTLACVAIIVVLAF) threads the bilayer. Residues 468–485 (ATRFLFSTPTNMIQESND) are Cytoplasmic-facing.

This sequence belongs to the major facilitator superfamily. Proton-dependent oligopeptide transporter (POT/PTR) (TC 2.A.17) family. Monomer.

It localises to the cell inner membrane. Its function is as follows. Proton-dependent permease that transports di- and tripeptides. Shows significantly higher specificity towards dipeptides than tripeptides. Has a preference for dipeptides with a C-terminal Lys residue. Can bind Ala-Lys, Lys-Ala, Ala-Ala. Can also transport alanine and trialanine. In Escherichia coli (strain K12), this protein is Dipeptide and tripeptide permease C.